The chain runs to 181 residues: MKQTILARRYAKAVFSIGADSGKYGEYNDALQAVANLYMTNPDVVDALTNPLYPLELREKVMVGIVKSMDIDAVMSNFLNLLVEKKRAEILPEIAEEFQAMVDDAQNLSHGSVISAVELSEELQGKIQQTLEKLTGKKVELTTSVDPSIIGGIVAKVGDLVLDGSIKTQLAGLKESIKGRE.

The protein belongs to the ATPase delta chain family. In terms of assembly, F-type ATPases have 2 components, F(1) - the catalytic core - and F(0) - the membrane proton channel. F(1) has five subunits: alpha(3), beta(3), gamma(1), delta(1), epsilon(1). F(0) has three main subunits: a(1), b(2) and c(10-14). The alpha and beta chains form an alternating ring which encloses part of the gamma chain. F(1) is attached to F(0) by a central stalk formed by the gamma and epsilon chains, while a peripheral stalk is formed by the delta and b chains.

It is found in the cell inner membrane. In terms of biological role, f(1)F(0) ATP synthase produces ATP from ADP in the presence of a proton or sodium gradient. F-type ATPases consist of two structural domains, F(1) containing the extramembraneous catalytic core and F(0) containing the membrane proton channel, linked together by a central stalk and a peripheral stalk. During catalysis, ATP synthesis in the catalytic domain of F(1) is coupled via a rotary mechanism of the central stalk subunits to proton translocation. This protein is part of the stalk that links CF(0) to CF(1). It either transmits conformational changes from CF(0) to CF(1) or is implicated in proton conduction. In Desulfotalea psychrophila (strain LSv54 / DSM 12343), this protein is ATP synthase subunit delta.